Consider the following 555-residue polypeptide: 2-isopropylmalate synthase (555 aa).

Residues 30-303 (PIWCSVDLRD…DPGLDCTDIN (274 aa)) enclose the Pyruvate carboxyltransferase domain. Residues D39, H242, H244, and N278 each coordinate Mg(2+). Positions 437-555 (QPDARIKFVD…VSAANRVIAK (119 aa)) are regulatory domain.

This sequence belongs to the alpha-IPM synthase/homocitrate synthase family. LeuA type 2 subfamily. In terms of assembly, homodimer. Requires Mg(2+) as cofactor.

Its subcellular location is the cytoplasm. The catalysed reaction is 3-methyl-2-oxobutanoate + acetyl-CoA + H2O = (2S)-2-isopropylmalate + CoA + H(+). Its pathway is amino-acid biosynthesis; L-leucine biosynthesis; L-leucine from 3-methyl-2-oxobutanoate: step 1/4. Catalyzes the condensation of the acetyl group of acetyl-CoA with 3-methyl-2-oxobutanoate (2-ketoisovalerate) to form 3-carboxy-3-hydroxy-4-methylpentanoate (2-isopropylmalate). The polypeptide is 2-isopropylmalate synthase (Brucella suis biovar 1 (strain 1330)).